The following is a 200-amino-acid chain: Glycerol-3-phosphate acyltransferase (200 aa).

The next 5 membrane-spanning stretches (helical) occupy residues 2-22 (IHLL…AVIV), 51-71 (TAAI…VVAA), 84-104 (IVLL…FFGF), 113-133 (ALGI…ATWV), and 143-163 (SLSA…LLGW).

Belongs to the PlsY family. In terms of assembly, probably interacts with PlsX.

It is found in the cell inner membrane. It carries out the reaction an acyl phosphate + sn-glycerol 3-phosphate = a 1-acyl-sn-glycero-3-phosphate + phosphate. It participates in lipid metabolism; phospholipid metabolism. Functionally, catalyzes the transfer of an acyl group from acyl-phosphate (acyl-PO(4)) to glycerol-3-phosphate (G3P) to form lysophosphatidic acid (LPA). This enzyme utilizes acyl-phosphate as fatty acyl donor, but not acyl-CoA or acyl-ACP. The protein is Glycerol-3-phosphate acyltransferase of Thiobacillus denitrificans (strain ATCC 25259 / T1).